A 329-amino-acid chain; its full sequence is Endonuclease 8-like 2 (329 aa).

Pro2 functions as the Schiff-base intermediate with DNA in the catalytic mechanism. Catalysis depends on Glu3, which acts as the Proton donor. The Proton donor; for beta-elimination activity role is filled by Lys50. N6-acetyllysine is present on Lys50. Ser68 is modified (phosphoserine). The disordered stretch occupies residues 88-112 (GPSAQEPSAGPSGSGEPVPSRSAET). Lys150 carries the post-translational modification N6-acetyllysine. Asn227 provides a ligand contact to DNA. The segment at 280 to 316 (QIYQKEQCPSGHQVMKETFGPPDGLQRLTWWCPQCQP) adopts an FPG-type zinc-finger fold. Arg306 acts as the Proton donor; for delta-elimination activity in catalysis.

The protein belongs to the FPG family. As to quaternary structure, binds EP300.

It localises to the nucleus. The catalysed reaction is 2'-deoxyribonucleotide-(2'-deoxyribose 5'-phosphate)-2'-deoxyribonucleotide-DNA = a 3'-end 2'-deoxyribonucleotide-(2,3-dehydro-2,3-deoxyribose 5'-phosphate)-DNA + a 5'-end 5'-phospho-2'-deoxyribonucleoside-DNA + H(+). Its activity is regulated as follows. Acetylation of Lys-50 leads to loss of DNA nicking activity. In terms of biological role, involved in base excision repair of DNA damaged by oxidation or by mutagenic agents. Has DNA glycosylase activity towards 5-hydroxyuracil and other oxidized derivatives of cytosine with a preference for mismatched double-stranded DNA (DNA bubbles). Has low or no DNA glycosylase activity towards thymine glycol, 2-hydroxyadenine, hypoxanthine and 8-oxoguanine. Has AP (apurinic/apyrimidinic) lyase activity and introduces nicks in the DNA strand. Cleaves the DNA backbone by beta-delta elimination to generate a single-strand break at the site of the removed base with both 3'- and 5'-phosphates. The polypeptide is Endonuclease 8-like 2 (Neil2) (Mus musculus (Mouse)).